A 93-amino-acid chain; its full sequence is Probable Fe(2+)-trafficking protein (93 aa).

It belongs to the Fe(2+)-trafficking protein family.

Its function is as follows. Could be a mediator in iron transactions between iron acquisition and iron-requiring processes, such as synthesis and/or repair of Fe-S clusters in biosynthetic enzymes. The polypeptide is Probable Fe(2+)-trafficking protein (Acidithiobacillus ferrooxidans (strain ATCC 23270 / DSM 14882 / CIP 104768 / NCIMB 8455) (Ferrobacillus ferrooxidans (strain ATCC 23270))).